The primary structure comprises 378 residues: Poly(3-hydroxyalkanoate) polymerase subunit PhaC (378 aa).

One can recognise an AB hydrolase-1 domain in the interval 84–356; that stretch reads PVLIVYALVN…QSFPVGHIGM (273 aa).

The protein belongs to the PHA/PHB synthase family. Type III PhaC subfamily. Forms a heterodimer with PhaE, which may multimerize in the presence of 3-hydroxybutyryl-CoA. Both subunits are required for PHB synthesis in E.coli and in PHA-negative A.eutrophus.

Its subcellular location is the cytoplasm. The enzyme catalyses (3R)-3-hydroxybutanoyl-CoA + [(3R)-hydroxybutanoate](n) = [(3R)-hydroxybutanoate](n+1) + CoA. It functions in the pathway biopolymer metabolism; poly-(R)-3-hydroxybutanoate biosynthesis. When expressed in E.coli with Synechocystis PhaE and C.necator PhaA and PhaB, confers the ability to synthesize up to 13% (w/w) poly(3-hydroxybutyrate) (PHB) depending on the carbon source; all 4 genes are necessary for PHB production. Cell-free in vitro coexpression with PhaE gives a heterodimer able to polymerize 3-hydroxybutyrate-CoA. This is Poly(3-hydroxyalkanoate) polymerase subunit PhaC from Synechocystis sp. (strain ATCC 27184 / PCC 6803 / Kazusa).